We begin with the raw amino-acid sequence, 609 residues long: Protein FRIGIDA (609 aa).

Low complexity predominate over residues M1–P18. The segment at M1–E31 is disordered. 2 coiled-coil regions span residues D60–N97 and Q409–E440. Disordered stretches follow at residues R454–D488 and S587–K609. Over residues Y474 to D484 the composition is skewed to basic and acidic residues. Polar residues predominate over residues L594 to K609.

Belongs to the Frigida family. Homodimer. Component of the transcription activator complex FRI-C composed of FRI, FRL1, SUF4, FLX and FES1. Interacts (via N-terminus) with FRL1 and (via C-terminus) with FLX (via N-terminus), SUF4 (via C-terminus) and FES1 (via C-terminus). Interacts with ASHH2 and RIN1, a component of the SWR1 chromatin-remodeling complex. Interacts with CBP20, FIP1 and FIP2. Expressed in ovules, but not in stamens.

Its subcellular location is the nucleus speckle. In terms of biological role, required for the regulation of flowering time in the late-flowering phenotype. Involved in the enrichment of a WDR5A-containing COMPASS-like complex at the 'FLOWERING LOCUS C' that trimethylates histone H3 'Lys-4', leading to FLC up-regulation and RNA levels increase. Variants with an early-flowering phenotype (Including cv. Columbia, cv. Landsberg Erecta and cv. Wassilewskija) show loss-of-function mutations of FRI. Able to delay flowering independently of FRL1 activity. Dispensable for the reactivation of FLC in early embryogenesis, but required to maintain high levels of FLC expression in later embryonic and vegetative development. Suppresses the repression of FLC by the autonomous pathway, but has no effect on the expression of the genes involved in this pathway. The protein is Protein FRIGIDA of Arabidopsis thaliana (Mouse-ear cress).